The sequence spans 623 residues: Xaa-Pro aminopeptidase 1 (623 aa).

Arg77 is an a peptide binding site. Position 304 is an N6-acetyllysine (Lys304). His395 is a binding site for a peptide. The Mn(2+) site is built by Asp415, Asp426, and His489. Residues His489, His498, and Glu523 each coordinate a peptide. Mn(2+) is bound by residues Glu523 and Glu537.

This sequence belongs to the peptidase M24B family. Homodimer. Mn(2+) serves as cofactor. As to expression, expressed in all tissues tested, including pancreas, heart, muscle, kidney, liver, lung and brain. Highest levels in pancreas.

It is found in the cytoplasm. It localises to the cytosol. It carries out the reaction Release of any N-terminal amino acid, including proline, that is linked to proline, even from a dipeptide or tripeptide.. With respect to regulation, inhibited by apstatin and the metal ion chelators EDTA and 1,10-phenanthroline. Partially inhibited by dithiothreitol. Not inhibited by enalaprilat or amastatin. Specifically inhibited by the pseudodipeptide CQ31. Inhibition by CQ31 indirectly activates the CARD8 inflammasome: dipeptide accumulation following PEPD inactivation weaky inhibit dipeptidyl peptidases DDP8 and DPP9, relieving DPP8- and/or DPP9-mediated inhibition of CARD8. Functionally, metalloaminopeptidase that catalyzes the removal of a penultimate prolyl residue from the N-termini of peptides, such as Arg-Pro-Pro. Contributes to the degradation of bradykinin. In Homo sapiens (Human), this protein is Xaa-Pro aminopeptidase 1.